A 286-amino-acid polypeptide reads, in one-letter code: Protein WVD2-like 1 (286 aa).

The interval 31–101 is disordered; the sequence is ETDEEFEVKE…ENKKHIDDED (71 aa). Residue threonine 32 is modified to Phosphothreonine. Basic and acidic residues predominate over residues 38 to 47; sequence VKECTEEKSL. Positions 131–182 form a coiled coil; that stretch reads AQRAEKRKEYYQKLEEKNQALEAERNELEQRQKDEQEAALKQLRKNLKFKAK. A disordered region spans residues 186–286; it reads NFYYEAPPAK…KPVNESSEEA (101 aa). Positions 234 to 247 are enriched in polar residues; it reads TVSNRNRHSTGTVQ.

The protein belongs to the TPX2 family.

Its subcellular location is the cytoplasm. The protein resides in the cytoskeleton. Microtubule-associated protein (MAP) that regulates the orientation of interphase cortical microtubules. Modulates both rotational polarity and anisotropic cell expansion during organ growth. Promotes clockwise root and etiolated hypocotyls coiling, clockwise leaf curling, but left-handed petiole twisting. In Arabidopsis thaliana (Mouse-ear cress), this protein is Protein WVD2-like 1 (WDL1).